The following is a 103-amino-acid chain: UPF0145 protein pXO2-45/BXB0052/GBAA_pXO2_0052 (103 aa).

The protein belongs to the UPF0145 family.

The sequence is that of UPF0145 protein pXO2-45/BXB0052/GBAA_pXO2_0052 from Bacillus anthracis.